A 600-amino-acid polypeptide reads, in one-letter code: Gamma-terpinene synthase, chloroplastic (600 aa).

Residues 1–40 (MALNLLSSLPAACNFTRLSLPLSSKVNGFVPPITQVQYPM) constitute a chloroplast transit peptide. Residues Asp353, Asp357, Asp498, and Glu506 each coordinate Mg(2+). The short motif at 353 to 357 (DDVYD) is the DDXXD motif element.

This sequence belongs to the terpene synthase family. Requires Mn(2+) as cofactor. It depends on Mg(2+) as a cofactor.

It localises to the plastid. It is found in the chloroplast. The enzyme catalyses (2E)-geranyl diphosphate = gamma-terpinene + diphosphate. It participates in secondary metabolite biosynthesis; terpenoid biosynthesis. With respect to regulation, inhibited by 100 mM KCl. Its function is as follows. Monoterpene synthase which catalyzes the conversion of geranyl diphosphate to gamma-terpinene and the minor products limonene, alpha-pinene, beta-pinene, alpha-terpinolene, alpha-thujene, alpha-terpinene, myrcene and sabinene. The chain is Gamma-terpinene synthase, chloroplastic from Citrus limon (Lemon).